Reading from the N-terminus, the 531-residue chain is Flavin-containing monooxygenase 3 (531 aa).

Residues 9–13, Glu32, 40–41, and 61–62 contribute to the FAD site; these read GAGIS, LW, and NS. NADP(+) is bound by residues 60–61 and 195–198; these read TN and SGCD. The chain crosses the membrane as a helical span at residues 511–531; it reads FSPWLKLLAIAVLLIAAVLVF.

Belongs to the FMO family. The cofactor is FAD. As to expression, liver.

The protein resides in the microsome membrane. It is found in the endoplasmic reticulum membrane. The catalysed reaction is trimethylamine + NADPH + O2 = trimethylamine N-oxide + NADP(+) + H2O. The enzyme catalyses N,N-dimethylaniline + NADPH + O2 + H(+) = N,N-dimethylaniline N-oxide + NADP(+) + H2O. It carries out the reaction hypotaurine + NADPH + O2 + H(+) = taurine + NADP(+) + H2O. It catalyses the reaction (S)-nicotine + NADPH + O2 = trans-(S)-nicotine N(1')-oxide + NADP(+) + H2O. The catalysed reaction is albendazole + NADPH + O2 + H(+) = albendazole S-oxide + NADP(+) + H2O. Essential hepatic enzyme that catalyzes the oxygenation of a wide variety of nitrogen- and sulfur-containing compounds including drugs as well as dietary compounds. Plays an important role in the metabolism of trimethylamine (TMA), via the production of trimethylamine N-oxide (TMAO) metabolite. TMA is generated by the action of gut microbiota using dietary precursors such as choline, choline containing compounds, betaine or L-carnitine. By regulating TMAO concentration, FMO3 directly impacts both platelet responsiveness and rate of thrombus formation. This Oryctolagus cuniculus (Rabbit) protein is Flavin-containing monooxygenase 3 (FMO3).